The following is a 303-amino-acid chain: Dehydrodolichyl diphosphate synthase 1 (303 aa).

The helical transmembrane segment at Leu14–Phe34 threads the bilayer.

This sequence belongs to the UPP synthase family. Requires Mg(2+) as cofactor. In terms of tissue distribution, expressed in low levels in the whole plant. Preferentially expressed in roots.

The protein resides in the endoplasmic reticulum membrane. The catalysed reaction is n isopentenyl diphosphate + (2E,6E)-farnesyl diphosphate = a di-trans,poly-cis-polyprenyl diphosphate + n diphosphate. It participates in protein modification; protein glycosylation. Functionally, catalyzes cis-prenyl chain elongation to produce the polyprenyl backbone of dolichol, a glycosyl carrier-lipid required for the biosynthesis of several classes of glycoprotein. This is Dehydrodolichyl diphosphate synthase 1 (DPS) from Arabidopsis thaliana (Mouse-ear cress).